A 140-amino-acid chain; its full sequence is Ribonuclease P protein component (140 aa).

The segment at 115 to 140 is disordered; that stretch reads RCKPGAPKPPPFKKRPNKSVKSNKQT.

This sequence belongs to the RnpA family. In terms of assembly, consists of a catalytic RNA component (M1 or rnpB) and a protein subunit.

It catalyses the reaction Endonucleolytic cleavage of RNA, removing 5'-extranucleotides from tRNA precursor.. In terms of biological role, RNaseP catalyzes the removal of the 5'-leader sequence from pre-tRNA to produce the mature 5'-terminus. It can also cleave other RNA substrates such as 4.5S RNA. The protein component plays an auxiliary but essential role in vivo by binding to the 5'-leader sequence and broadening the substrate specificity of the ribozyme. This is Ribonuclease P protein component from Pseudoalteromonas translucida (strain TAC 125).